The sequence spans 84 residues: Large ribosomal subunit protein bL27 (84 aa).

Residues 1–20 form a disordered region; it reads MAHKKGGGSTKNGRDSNPKY.

It belongs to the bacterial ribosomal protein bL27 family.

The sequence is that of Large ribosomal subunit protein bL27 (rpmA) from Prosthecochloris vibrioformis (Chlorobium vibrioforme).